Reading from the N-terminus, the 299-residue chain is Protein translocase subunit SecF (299 aa).

A run of 6 helical transmembrane segments spans residues 14–34 (VLIV…FYHG), 142–162 (IFLV…RFKL), 166–186 (IASI…LGVF), 193–213 (YIIV…IIIF), 245–265 (LTSV…EGSI), and 270–290 (LVFM…ASPI).

The protein belongs to the SecD/SecF family. SecF subfamily. In terms of assembly, forms a complex with SecD. Part of the essential Sec protein translocation apparatus which comprises SecA, SecYEG and auxiliary proteins SecDF. Other proteins may also be involved.

It localises to the cell inner membrane. Part of the Sec protein translocase complex. Interacts with the SecYEG preprotein conducting channel. SecDF uses the proton motive force (PMF) to complete protein translocation after the ATP-dependent function of SecA. This chain is Protein translocase subunit SecF, found in Borreliella burgdorferi (strain ATCC 35210 / DSM 4680 / CIP 102532 / B31) (Borrelia burgdorferi).